We begin with the raw amino-acid sequence, 129 residues long: UPF0102 protein amb4503 (129 aa).

It belongs to the UPF0102 family.

The sequence is that of UPF0102 protein amb4503 from Paramagnetospirillum magneticum (strain ATCC 700264 / AMB-1) (Magnetospirillum magneticum).